We begin with the raw amino-acid sequence, 81 residues long: MQPLQILAIVALVVAAIIAIVVWTIVYIEYRKILRQRKIDRLIDRITERAEDSGNESEGDQEELSALVERGHLAPWDVDDL.

Residues 1 to 7 (MQPLQIL) lie on the Extracellular side of the membrane. A helical membrane pass occupies residues 8–28 (AIVALVVAAIIAIVVWTIVYI). Over 29–81 (EYRKILRQRKIDRLIDRITERAEDSGNESEGDQEELSALVERGHLAPWDVDDL) the chain is Cytoplasmic. Positions 50 to 81 (AEDSGNESEGDQEELSALVERGHLAPWDVDDL) are disordered. Phosphoserine; by host CK2 is present on residues S53 and S57. The span at 53-63 (SGNESEGDQEE) shows a compositional bias: acidic residues.

Belongs to the HIV-1 VPU protein family. In terms of assembly, homopentamer. Interacts with host CD4 and BRTC; these interactions induce proteasomal degradation of CD4. Interacts with host BST2; this interaction leads to the degradation of host BST2. Interacts with host FBXW11. Interacts with host AP1M1; this interaction plays a role in the mistrafficking and subsequent degradation of host BST2. Interacts with host RANBP2; this interaction allows Vpu to down-regulate host BLM sumoylation. Post-translationally, phosphorylated by host CK2. This phosphorylation is necessary for interaction with human BTRC and degradation of CD4.

It localises to the host membrane. With respect to regulation, ion channel activity is inhibited by hexamethylene amiloride in vitro. In terms of biological role, enhances virion budding by targeting host CD4 and Tetherin/BST2 to proteasome degradation. Degradation of CD4 prevents any unwanted premature interactions between viral Env and its host receptor CD4 in the endoplasmic reticulum. Degradation of antiretroviral protein Tetherin/BST2 is important for virion budding, as BST2 tethers new viral particles to the host cell membrane. Mechanistically, Vpu bridges either CD4 or BST2 to BTRC, a substrate recognition subunit of the Skp1/Cullin/F-box protein E3 ubiquitin ligase, induces their ubiquitination and subsequent proteasomal degradation. The alteration of the E3 ligase specificity by Vpu seems to promote the degradation of host IKBKB, leading to NF-kappa-B down-regulation and subsequent apoptosis. Acts as a viroporin that forms an oligomeric ion channel in membranes. Modulates the host DNA repair mechanisms to promote degradation of nuclear viral cDNA in cells that are already productively infected in order to suppress immune sensing and proviral hyper-integration (superinfection). Manipulates PML-NBs and modulates SUMOylation of host BLM protein thereby enhancing its DNA-end processing activity toward viral unintegrated linear DNA. Also inhibits RAD52-mediated homologous repair of viral cDNA, preventing the generation of dead-end circular forms of single copies of the long terminal repeat and permitting sustained nucleolytic attack. In Human immunodeficiency virus type 1 group M subtype B (isolate SF162) (HIV-1), this protein is Protein Vpu.